A 686-amino-acid chain; its full sequence is Polyribonucleotide nucleotidyltransferase (686 aa).

Mg(2+) contacts are provided by D478 and D484. Positions 545–604 (PRVEVIQIPTDKIGLLIGPGGKTINALQDEYGVNISVENDGTVYVAGVEGMSVKAAVSAI) constitute a KH domain. In terms of domain architecture, S1 motif spans 614–684 (GDIYVGKVVK…KQNRISLEMV (71 aa)).

Belongs to the polyribonucleotide nucleotidyltransferase family. It depends on Mg(2+) as a cofactor.

The protein resides in the cytoplasm. The enzyme catalyses RNA(n+1) + phosphate = RNA(n) + a ribonucleoside 5'-diphosphate. Involved in mRNA degradation. Catalyzes the phosphorolysis of single-stranded polyribonucleotides processively in the 3'- to 5'-direction. The chain is Polyribonucleotide nucleotidyltransferase from Rubrobacter xylanophilus (strain DSM 9941 / JCM 11954 / NBRC 16129 / PRD-1).